We begin with the raw amino-acid sequence, 43 residues long: Potassium channel toxin gamma-KTx 4.12 (43 aa).

4 cysteine pairs are disulfide-bonded: cysteine 5/cysteine 23, cysteine 11/cysteine 34, cysteine 20/cysteine 39, and cysteine 24/cysteine 41.

As to expression, expressed by the venom gland.

The protein resides in the secreted. Functionally, reversibly blocks Kv11/ERG potassium channels. Is less toxic than ergtoxin (AC Q86QT3). The polypeptide is Potassium channel toxin gamma-KTx 4.12 (Centruroides sculpturatus (Arizona bark scorpion)).